Consider the following 423-residue polypeptide: MANIIKAIRGMNDCSPTDSPLWQWIEDKVRNVLASYGYSEVRMPIVESTPLFARAIGEVTDVVSKEMYTFWDNDEQLTLRPEGTAGCVRAAIENGWIYNNEQRLWYMGPMFRHERPQKGRYRQFHQAGVEIFGIANPEIDAELIILTARLWKELGIEQHVSLQLNSIGSLAARAGYRTALVAFLENHQALMSDEEKERLLKNPLRILDTKNEALQEVLNDAPKLLDYLDDESRQHFTQLCALLDNMGVQYEINPKLVRGLDYYNKTVFEWVTSALGAQGTVCGGGRYDGLVEQLGGHATQGVGFAMGLERLVLLVQEVNKNISVPNAVDIYVVFSGEGTTLAAFQTAEKIRSELPHLRVMTHCSGGKFQKQFKRADKLGAKLALVIGESEVQTDRVVVKDLSGAVEQQTISVVELIDYLKRVF.

This sequence belongs to the class-II aminoacyl-tRNA synthetase family. In terms of assembly, homodimer.

The protein resides in the cytoplasm. The enzyme catalyses tRNA(His) + L-histidine + ATP = L-histidyl-tRNA(His) + AMP + diphosphate + H(+). This is Histidine--tRNA ligase from Actinobacillus succinogenes (strain ATCC 55618 / DSM 22257 / CCUG 43843 / 130Z).